A 938-amino-acid chain; its full sequence is Translation initiation factor IF-2 (938 aa).

The segment at 55-322 (KAEASAAPAA…RKSKRARRQE (268 aa)) is disordered. Composition is skewed to low complexity over residues 57–68 (EASAAPAAPAEK) and 77–117 (KKAA…AAAP). A compositionally biased stretch (pro residues) spans 118 to 136 (KPGPKPAPVAEQPAPPAEP). Composition is skewed to low complexity over residues 141–153 (APEAPAASAAPAA), 180–198 (GMGRRPAPGAPAAPGAGDN), and 224–233 (MMPKSPSAFG). Over residues 247 to 293 (PGRGGAPGRGGAPGRGGVGTGAPGRGGAPGGGFGPSGGGRPGGGRPG) the composition is skewed to gly residues. The segment covering 310–319 (RRGRKSKRAR) has biased composition (basic residues). The tr-type G domain occupies 431–603 (ARPPVVTVMG…VVLTADASLD (173 aa)). The interval 440-447 (GHVDHGKT) is G1. 440–447 (GHVDHGKT) provides a ligand contact to GTP. The interval 465–469 (GITQH) is G2. The G3 stretch occupies residues 490–493 (DTPG). GTP contacts are provided by residues 490–494 (DTPGH) and 544–547 (NKID). Residues 544–547 (NKID) are G4. Residues 580–582 (SAK) are G5.

Belongs to the TRAFAC class translation factor GTPase superfamily. Classic translation factor GTPase family. IF-2 subfamily.

The protein localises to the cytoplasm. Its function is as follows. One of the essential components for the initiation of protein synthesis. Protects formylmethionyl-tRNA from spontaneous hydrolysis and promotes its binding to the 30S ribosomal subunits. Also involved in the hydrolysis of GTP during the formation of the 70S ribosomal complex. The sequence is that of Translation initiation factor IF-2 from Nocardioides sp. (strain ATCC BAA-499 / JS614).